The primary structure comprises 695 residues: Elongation factor G 2 (695 aa).

In terms of domain architecture, tr-type G spans 5 to 280 (SKYRNIGIFA…AVVDYLPSPT (276 aa)). GTP is bound by residues 14 to 21 (AHVDAGKT), 78 to 82 (DTPGH), and 132 to 135 (NKLD).

This sequence belongs to the TRAFAC class translation factor GTPase superfamily. Classic translation factor GTPase family. EF-G/EF-2 subfamily.

Its subcellular location is the cytoplasm. Catalyzes the GTP-dependent ribosomal translocation step during translation elongation. During this step, the ribosome changes from the pre-translocational (PRE) to the post-translocational (POST) state as the newly formed A-site-bound peptidyl-tRNA and P-site-bound deacylated tRNA move to the P and E sites, respectively. Catalyzes the coordinated movement of the two tRNA molecules, the mRNA and conformational changes in the ribosome. This chain is Elongation factor G 2, found in Vibrio vulnificus (strain YJ016).